Reading from the N-terminus, the 343-residue chain is Retroviral-like aspartic protease 1 (343 aa).

The Cytoplasmic portion of the chain corresponds to 1 to 55; that stretch reads MGSPGASLGIKKALQSEQATALPASAPAVSQPTAPAPSCLPKAGQVIPTLLREAP. The propeptide occupies 1-190; it reads MGSPGASLGI…HLPKEIVFAN (190 aa). Residues 56–76 form a helical membrane-spanning segment; that stretch reads FSSVIAPTLLCGFLFLAWVAA. Residues 77–343 lie on the Extracellular side of the membrane; sequence EVPEESSRMA…SEEGRQELSH (267 aa). One can recognise a Peptidase A2 domain in the interval 207-288; the sequence is VRFLVDSGAQ…AEEAIIGTDV (82 aa). Residue D212 is part of the active site. N-linked (GlcNAc...) asparagine glycosylation occurs at N276. Positions 327 to 343 are excised as a propeptide; that stretch reads LIEEDPSSEEGRQELSH.

Homodimer. In terms of processing, undergoes autocleavage which is necessary for activation of the protein. In terms of tissue distribution, expressed primarily in the granular layer of the epidermis and inner root sheath of hair follicles. In psoriatic skin, expressed throughout the stratum corneum. In ulcerated skin, expressed in the stratum granulosum of intact epidermis but almost absent from ulcerated regions. Expressed in differentiated areas of squamous cell carcinomas but not in undifferentiated tumors.

It localises to the membrane. In terms of biological role, protease responsible for filaggrin processing, essential for the maintenance of a proper epidermis organization. In Homo sapiens (Human), this protein is Retroviral-like aspartic protease 1.